A 959-amino-acid polypeptide reads, in one-letter code: Alanine--tRNA ligase (959 aa).

Phosphoserine is present on S389. H606, H610, C725, and H729 together coordinate Zn(2+).

Belongs to the class-II aminoacyl-tRNA synthetase family. Monomer. Zn(2+) is required as a cofactor.

It is found in the mitochondrion. The protein resides in the cytoplasm. The enzyme catalyses tRNA(Ala) + L-alanine + ATP = L-alanyl-tRNA(Ala) + AMP + diphosphate. Functionally, catalyzes the attachment of alanine to tRNA(Ala) in a two-step reaction: alanine is first activated by ATP to form Ala-AMP and then transferred to the acceptor end of tRNA(Ala). Also edits incorrectly charged tRNA(Ala) via its editing domain. This Schizosaccharomyces pombe (strain 972 / ATCC 24843) (Fission yeast) protein is Alanine--tRNA ligase (ala1).